Consider the following 178-residue polypeptide: Oligoribonuclease (178 aa).

One can recognise an Exonuclease domain in the interval 7 to 168 (LIWIDLEMTG…DDIRESIAEL (162 aa)). Y128 is an active-site residue.

It belongs to the oligoribonuclease family.

The protein resides in the cytoplasm. 3'-to-5' exoribonuclease specific for small oligoribonucleotides. This is Oligoribonuclease from Pseudomonas savastanoi pv. phaseolicola (strain 1448A / Race 6) (Pseudomonas syringae pv. phaseolicola (strain 1448A / Race 6)).